We begin with the raw amino-acid sequence, 189 residues long: Potassium-transporting ATPase KdpC subunit (189 aa).

The helical transmembrane segment at 10-30 (VIFAMLTLICGVIYPYAITGI) threads the bilayer.

The protein belongs to the KdpC family. In terms of assembly, the system is composed of three essential subunits: KdpA, KdpB and KdpC.

Its subcellular location is the cell inner membrane. Part of the high-affinity ATP-driven potassium transport (or Kdp) system, which catalyzes the hydrolysis of ATP coupled with the electrogenic transport of potassium into the cytoplasm. This subunit acts as a catalytic chaperone that increases the ATP-binding affinity of the ATP-hydrolyzing subunit KdpB by the formation of a transient KdpB/KdpC/ATP ternary complex. The polypeptide is Potassium-transporting ATPase KdpC subunit (Janthinobacterium sp. (strain Marseille) (Minibacterium massiliensis)).